A 143-amino-acid polypeptide reads, in one-letter code: UPF0201 protein Tneu_0685 (143 aa).

Belongs to the UPF0201 family.

This is UPF0201 protein Tneu_0685 from Pyrobaculum neutrophilum (strain DSM 2338 / JCM 9278 / NBRC 100436 / V24Sta) (Thermoproteus neutrophilus).